Consider the following 383-residue polypeptide: Succinyl-diaminopimelate desuccinylase (383 aa).

His-79 provides a ligand contact to Zn(2+). The active site involves Asp-81. Asp-110 serves as a coordination point for Zn(2+). Glu-141 serves as the catalytic Proton acceptor. Zn(2+) contacts are provided by Glu-142, Glu-170, and His-355.

The protein belongs to the peptidase M20A family. DapE subfamily. Homodimer. It depends on Zn(2+) as a cofactor. Co(2+) is required as a cofactor.

It carries out the reaction N-succinyl-(2S,6S)-2,6-diaminopimelate + H2O = (2S,6S)-2,6-diaminopimelate + succinate. The protein operates within amino-acid biosynthesis; L-lysine biosynthesis via DAP pathway; LL-2,6-diaminopimelate from (S)-tetrahydrodipicolinate (succinylase route): step 3/3. Functionally, catalyzes the hydrolysis of N-succinyl-L,L-diaminopimelic acid (SDAP), forming succinate and LL-2,6-diaminopimelate (DAP), an intermediate involved in the bacterial biosynthesis of lysine and meso-diaminopimelic acid, an essential component of bacterial cell walls. The chain is Succinyl-diaminopimelate desuccinylase from Helicobacter pylori (strain ATCC 700392 / 26695) (Campylobacter pylori).